The sequence spans 361 residues: DNA replication and repair protein RecF (361 aa).

30–37 serves as a coordination point for ATP; that stretch reads GDNAQGKT.

Belongs to the RecF family.

It localises to the cytoplasm. Its function is as follows. The RecF protein is involved in DNA metabolism; it is required for DNA replication and normal SOS inducibility. RecF binds preferentially to single-stranded, linear DNA. It also seems to bind ATP. This is DNA replication and repair protein RecF from Clostridium perfringens (strain ATCC 13124 / DSM 756 / JCM 1290 / NCIMB 6125 / NCTC 8237 / Type A).